The sequence spans 194 residues: UPF0301 protein FTH_1193 (194 aa).

This sequence belongs to the UPF0301 (AlgH) family.

The chain is UPF0301 protein FTH_1193 from Francisella tularensis subsp. holarctica (strain OSU18).